Reading from the N-terminus, the 107-residue chain is UPF0145 protein CKO_02237 (107 aa).

It belongs to the UPF0145 family.

In Citrobacter koseri (strain ATCC BAA-895 / CDC 4225-83 / SGSC4696), this protein is UPF0145 protein CKO_02237.